The primary structure comprises 115 residues: Large ribosomal subunit protein bL19 (115 aa).

This sequence belongs to the bacterial ribosomal protein bL19 family.

Its function is as follows. This protein is located at the 30S-50S ribosomal subunit interface and may play a role in the structure and function of the aminoacyl-tRNA binding site. This is Large ribosomal subunit protein bL19 from Fervidobacterium nodosum (strain ATCC 35602 / DSM 5306 / Rt17-B1).